The chain runs to 417 residues: NADH-quinone oxidoreductase subunit D (417 aa).

The protein belongs to the complex I 49 kDa subunit family. As to quaternary structure, NDH-1 is composed of 14 different subunits. Subunits NuoB, C, D, E, F, and G constitute the peripheral sector of the complex.

It localises to the cell membrane. The enzyme catalyses a quinone + NADH + 5 H(+)(in) = a quinol + NAD(+) + 4 H(+)(out). NDH-1 shuttles electrons from NADH, via FMN and iron-sulfur (Fe-S) centers, to quinones in the respiratory chain. The immediate electron acceptor for the enzyme in this species is believed to be ubiquinone. Couples the redox reaction to proton translocation (for every two electrons transferred, four hydrogen ions are translocated across the cytoplasmic membrane), and thus conserves the redox energy in a proton gradient. This chain is NADH-quinone oxidoreductase subunit D, found in Polynucleobacter asymbioticus (strain DSM 18221 / CIP 109841 / QLW-P1DMWA-1) (Polynucleobacter necessarius subsp. asymbioticus).